The sequence spans 350 residues: Hydroxymethylglutaryl-CoA synthase (350 aa).

The Proton donor/acceptor role is filled by E83. C115 acts as the Acyl-thioester intermediate in catalysis. (3S)-3-hydroxy-3-methylglutaryl-CoA contacts are provided by C115 and T156. Position 204 (R204) interacts with CoA. Residues T206 and H239 each coordinate (3S)-3-hydroxy-3-methylglutaryl-CoA. Residue H239 is the Proton donor/acceptor of the active site. K244 contributes to the CoA binding site. (3S)-3-hydroxy-3-methylglutaryl-CoA is bound by residues N271 and S301.

It belongs to the thiolase-like superfamily. Archaeal HMG-CoA synthase family. As to quaternary structure, interacts with acetoacetyl-CoA thiolase that catalyzes the precedent step in the pathway and with a DUF35 protein. The acetoacetyl-CoA thiolase/HMG-CoA synthase complex channels the intermediate via a fused CoA-binding site, which allows for efficient coupling of the endergonic thiolase reaction with the exergonic HMGCS reaction.

The enzyme catalyses acetoacetyl-CoA + acetyl-CoA + H2O = (3S)-3-hydroxy-3-methylglutaryl-CoA + CoA + H(+). It functions in the pathway metabolic intermediate biosynthesis; (R)-mevalonate biosynthesis; (R)-mevalonate from acetyl-CoA: step 2/3. Functionally, catalyzes the condensation of acetyl-CoA with acetoacetyl-CoA to form 3-hydroxy-3-methylglutaryl-CoA (HMG-CoA). Functions in the mevalonate (MVA) pathway leading to isopentenyl diphosphate (IPP), a key precursor for the biosynthesis of isoprenoid compounds that are building blocks of archaeal membrane lipids. This Pyrococcus furiosus (strain ATCC 43587 / DSM 3638 / JCM 8422 / Vc1) protein is Hydroxymethylglutaryl-CoA synthase.